Consider the following 49-residue polypeptide: Large ribosomal subunit protein bL33B (49 aa).

This sequence belongs to the bacterial ribosomal protein bL33 family.

The protein is Large ribosomal subunit protein bL33B of Bacillus licheniformis (strain ATCC 14580 / DSM 13 / JCM 2505 / CCUG 7422 / NBRC 12200 / NCIMB 9375 / NCTC 10341 / NRRL NRS-1264 / Gibson 46).